The sequence spans 128 residues: Large ribosomal subunit protein bL19 (128 aa).

Belongs to the bacterial ribosomal protein bL19 family.

This protein is located at the 30S-50S ribosomal subunit interface and may play a role in the structure and function of the aminoacyl-tRNA binding site. The sequence is that of Large ribosomal subunit protein bL19 from Ralstonia nicotianae (strain ATCC BAA-1114 / GMI1000) (Ralstonia solanacearum).